Here is a 355-residue protein sequence, read N- to C-terminus: UDP-N-acetylglucosamine--N-acetylmuramyl-(pentapeptide) pyrophosphoryl-undecaprenol N-acetylglucosamine transferase (355 aa).

Residues 14–16 (TGG), Asn-126, Arg-162, Ser-190, Ile-244, and Gln-289 contribute to the UDP-N-acetyl-alpha-D-glucosamine site.

It belongs to the glycosyltransferase 28 family. MurG subfamily.

The protein resides in the cell inner membrane. It catalyses the reaction di-trans,octa-cis-undecaprenyl diphospho-N-acetyl-alpha-D-muramoyl-L-alanyl-D-glutamyl-meso-2,6-diaminopimeloyl-D-alanyl-D-alanine + UDP-N-acetyl-alpha-D-glucosamine = di-trans,octa-cis-undecaprenyl diphospho-[N-acetyl-alpha-D-glucosaminyl-(1-&gt;4)]-N-acetyl-alpha-D-muramoyl-L-alanyl-D-glutamyl-meso-2,6-diaminopimeloyl-D-alanyl-D-alanine + UDP + H(+). It functions in the pathway cell wall biogenesis; peptidoglycan biosynthesis. Its function is as follows. Cell wall formation. Catalyzes the transfer of a GlcNAc subunit on undecaprenyl-pyrophosphoryl-MurNAc-pentapeptide (lipid intermediate I) to form undecaprenyl-pyrophosphoryl-MurNAc-(pentapeptide)GlcNAc (lipid intermediate II). In Paracidovorax citrulli (strain AAC00-1) (Acidovorax citrulli), this protein is UDP-N-acetylglucosamine--N-acetylmuramyl-(pentapeptide) pyrophosphoryl-undecaprenol N-acetylglucosamine transferase.